The sequence spans 369 residues: 3-dehydroquinate synthase (369 aa).

NAD(+) contacts are provided by residues 75 to 80, 109 to 113, 133 to 134, lysine 146, lysine 155, and 173 to 176; these read DGEEHK, GVIGD, TT, and TLKT. Residues glutamate 188, histidine 251, and histidine 268 each contribute to the Zn(2+) site.

This sequence belongs to the sugar phosphate cyclases superfamily. Dehydroquinate synthase family. Co(2+) is required as a cofactor. It depends on Zn(2+) as a cofactor. NAD(+) serves as cofactor.

The protein localises to the cytoplasm. It catalyses the reaction 7-phospho-2-dehydro-3-deoxy-D-arabino-heptonate = 3-dehydroquinate + phosphate. It functions in the pathway metabolic intermediate biosynthesis; chorismate biosynthesis; chorismate from D-erythrose 4-phosphate and phosphoenolpyruvate: step 2/7. Functionally, catalyzes the conversion of 3-deoxy-D-arabino-heptulosonate 7-phosphate (DAHP) to dehydroquinate (DHQ). This is 3-dehydroquinate synthase from Legionella pneumophila subsp. pneumophila (strain Philadelphia 1 / ATCC 33152 / DSM 7513).